A 220-amino-acid polypeptide reads, in one-letter code: MKEYDYLFKIIVIGDSGTGKSSLLLRFADNTYSESYMSTIGVDFKIKTVKIDNTTIKLQIWDTAGQERFRTITSTYYRGAHGIICVYDVTNKLSFDHITETWLQDIDKYATSNVCKLLIGNKIDLAESRVVSADEAKHVAEQNNMNYIEASAKTDSNVEKAFTTIAKALKDKVTQYPSNAPASTVSLNTASKVPTNRGLTDSCQESSVFKKMNFSSGKCT.

GTP is bound at residue 14 to 21; that stretch reads GDSGTGKS. The Effector region signature appears at 36–44; the sequence is YMSTIGVDF. GTP-binding positions include 62–66 and 121–124; these read DTAGQ and NKID. A lipid anchor (S-geranylgeranyl cysteine) is attached at Cys219.

It belongs to the small GTPase superfamily. Rab family.

It is found in the cell membrane. In terms of biological role, protein transport. Probably involved in vesicular traffic from ER to Golgi. The polypeptide is Ras-related protein Rab-1 (rab1) (Theileria parva (East coast fever infection agent)).